Reading from the N-terminus, the 590-residue chain is Zinc finger protein 285 (590 aa).

The KRAB domain maps to 8–86 (VTFKDVAVVF…WKQRIRDLTV (79 aa)). A C2H2-type 1 zinc finger spans residues 232-254 (FPCNNCGVAFADDTDPHVHHSTH). The C2H2-type 2; degenerate zinc-finger motif lies at 260–282 (YKCDQYGKNFSQSQDLIVHCKTH). 9 C2H2-type zinc fingers span residues 316 to 338 (YKCK…HRVH), 344 to 366 (YKCD…QGVH), 372 to 394 (YKCE…QRVH), 400 to 422 (YKCS…WRFH), 428 to 450 (YRCG…QRVH), 456 to 478 (YKCN…QRVH), 484 to 506 (YKCE…QRDH), 512 to 534 (YKCD…LRVH), and 540 to 562 (YKCK…QRVH).

The protein belongs to the krueppel C2H2-type zinc-finger protein family.

Its subcellular location is the nucleus. May be involved in transcriptional regulation. The sequence is that of Zinc finger protein 285 (ZNF285) from Homo sapiens (Human).